Reading from the N-terminus, the 434-residue chain is MNPDEVNRALGHYLNDADSGELVVEDSTTVQVKNPEARKTGDKIEVFYSRKTTVVSPTNSDDEDADFCSDSELLPQQEGHRSRATSFAGRIRAGSDDEAMPKHTILRYRRKKGGQWREINLQGTPDKRKDDEDELEVDVKEDRSEQTGIVTKTYEARWKVLKYEHLPEWLQDNEFLRHGHRPPLPSFSECFKSIWSLHTETGNIWTHLIGCVAFFFLACWFLTRPDNHIQFQEKVVFSFFFAGAVLCLGLSFAFHTLSCHSVNVVKIFCKLDYMGISLLIIGSFIPWIYYGFYCRREPKITYIAMVSVLGIGAIVVSLWDKFSESRFRPIRAAVFVGMGCSGVIPTIHYIITDGVHSLFADNSFHWLLLMAFLYLLGAGLYATRTPERFFPGKCDIWFQSHQLFHTCVVIAAFVHYYGISEMAFARLNEQCPVR.

Residues Met1 to Thr201 lie on the Cytoplasmic side of the membrane. Disordered stretches follow at residues Leu74–His103 and Glu118–Val137. The helical transmembrane segment at Gly202 to Leu222 threads the bilayer. Residues Thr223–Lys234 are Extracellular-facing. Residues Val235–His255 form a helical membrane-spanning segment. At Thr256 to Tyr273 the chain is on the cytoplasmic side. The chain crosses the membrane as a helical span at residues Met274–Cys294. Residues Arg295–Lys299 are Extracellular-facing. Residues Ile300–Asp320 traverse the membrane as a helical segment. Residues Lys321–Arg331 are Cytoplasmic-facing. Residues Ala332 to Thr352 form a helical membrane-spanning segment. Topologically, residues Asp353–Asn362 are extracellular. The chain crosses the membrane as a helical span at residues Ser363 to Thr383. The Cytoplasmic portion of the chain corresponds to Arg384–Leu403. A helical transmembrane segment spans residues Phe404–Phe424. At Ala425–Arg434 the chain is on the extracellular side.

The protein belongs to the ADIPOR family.

It is found in the membrane. In terms of biological role, probable receptor, which may be involved in metabolic pathways that regulate lipid metabolism such as fatty acid oxidation. The protein is Progestin and adipoQ receptor-like protein 1 (paqr-1) of Caenorhabditis elegans.